A 286-amino-acid polypeptide reads, in one-letter code: Protease HtpX homolog (286 aa).

2 consecutive transmembrane segments (helical) span residues 6 to 26 (TCFL…YVGG) and 28 to 48 (QGMI…YFFS). H130 lines the Zn(2+) pocket. Residue E131 is part of the active site. Residue H134 coordinates Zn(2+). 2 consecutive transmembrane segments (helical) span residues 140 to 160 (ILTG…ANFA) and 178 to 198 (AIML…QMAI). Position 203 (E203) interacts with Zn(2+).

It belongs to the peptidase M48B family. Zn(2+) serves as cofactor.

The protein localises to the cell inner membrane. The chain is Protease HtpX homolog from Campylobacter curvus (strain 525.92).